The sequence spans 426 residues: MTKFETVRGMKDYIGIDAEKIRYLESTFRDLAIKYGYSEIITPVVEEFKLFALKGGEELRETMYVFKDKADRELSLRPEITPSVARAYIQNLQSSPKPIRLFYFGTVYRYDEPQYGRYREFRQAGIEMIGDSSILADLEVLDLLYNFYDKLNLSNDITIKINNIGIFRKIMDKYNIEDNLQEHILHLIDKNKINEALDILEKNLKNKDIIDFFNKILTKKDTKLEDIESLAELEEVSRLDIKSEFLYLFRLSRILSDLNIKFKIDLGFVRGLAYYTGLIFEVLHPSVQFSIAGGGRYDKLIELYGGLPSPAIGFAIGVERTLLVIKDLKVEEPVNVIVIGMSEDTIPSMFMVSRILRKEEYKVVINTKDQPLSKLLPYYASQGFKVAIIIGKQELEKNMITVRNLITRKQISVPLENIEDAIKQTL.

It belongs to the class-II aminoacyl-tRNA synthetase family.

Its subcellular location is the cytoplasm. It carries out the reaction tRNA(His) + L-histidine + ATP = L-histidyl-tRNA(His) + AMP + diphosphate + H(+). This chain is Histidine--tRNA ligase, found in Saccharolobus islandicus (strain Y.G.57.14 / Yellowstone #1) (Sulfolobus islandicus).